The primary structure comprises 411 residues: Arginine deiminase (411 aa).

Catalysis depends on C401, which acts as the Amidino-cysteine intermediate.

It belongs to the arginine deiminase family. Post-translationally, glycosylated.

It localises to the cytoplasm. The catalysed reaction is L-arginine + H2O = L-citrulline + NH4(+). Its pathway is amino-acid degradation; L-arginine degradation via ADI pathway; carbamoyl phosphate from L-arginine: step 1/2. The chain is Arginine deiminase from Streptococcus pyogenes serotype M3 (strain ATCC BAA-595 / MGAS315).